Consider the following 171-residue polypeptide: Large ribosomal subunit protein uL10 (171 aa).

Belongs to the universal ribosomal protein uL10 family. As to quaternary structure, part of the ribosomal stalk of the 50S ribosomal subunit. The N-terminus interacts with L11 and the large rRNA to form the base of the stalk. The C-terminus forms an elongated spine to which L12 dimers bind in a sequential fashion forming a multimeric L10(L12)X complex.

Its function is as follows. Forms part of the ribosomal stalk, playing a central role in the interaction of the ribosome with GTP-bound translation factors. The polypeptide is Large ribosomal subunit protein uL10 (Nitrosomonas europaea (strain ATCC 19718 / CIP 103999 / KCTC 2705 / NBRC 14298)).